The sequence spans 905 residues: Transcription termination factor 1 (905 aa).

Basic and acidic residues-rich tracts occupy residues 1-16 (MEGE…PVSD) and 24-33 (IHKERPQKHS). Residues 1–33 (MEGESSRFEIHTPVSDKKKKKCSIHKERPQKHS) form a disordered region. Residues 1 to 223 (MEGESSRFEI…AHKNKSKKKK (223 aa)) are N-terminal region (NRD). Ser65 bears the Phosphoserine mark. The segment at 151–443 (SHAHKSEALH…KSRPRQKKTQ (293 aa)) is disordered. 2 stretches are compositionally biased toward basic residues: residues 163–174 (VREKKNKKHQRK) and 215–226 (HKNKSKKKKKKS). A Phosphoserine modification is found at Ser240. Thr248 is subject to Phosphothreonine. Basic residues-rich tracts occupy residues 270 to 283 (THKK…KKKS), 330 to 339 (NKSKKKKKKS), and 385 to 401 (TKKK…KRAR). Ser403 bears the Phosphoserine mark. The segment covering 410-419 (PSKNSESTLF) has biased composition (polar residues). Tyr476 carries the post-translational modification Phosphotyrosine. 3 positions are modified to phosphoserine: Ser478, Ser481, and Ser487. Residues 498–886 (LQEFIPNIKD…IEKESEGQAP (389 aa)) are may be involved in interaction with ARF. Myb-like domains are found at residues 612 to 661 (DVNN…SQIS) and 661 to 745 (SSQR…TEIL). Lys700 is covalently cross-linked (Glycyl lysine isopeptide (Lys-Gly) (interchain with G-Cter in SUMO2)). Ser872 bears the Phosphoserine mark.

Oligomer. The oligomeric structure enables to interact simultaneously with two separate DNA fragments. Interacts with BAZ2A/TIP5. Interacts with CAVIN1. Interacts (via the N-terminal region (NRD) and a C-terminal region) with CDKN2A/ARF; the interaction is direct. Interacts (via C-terminal region) with NPM1/B23.

The protein localises to the nucleus. Its subcellular location is the nucleolus. It localises to the nucleoplasm. In terms of biological role, multifunctional nucleolar protein that terminates ribosomal gene transcription, mediates replication fork arrest and regulates RNA polymerase I transcription on chromatin. Plays a dual role in rDNA regulation, being involved in both activation and silencing of rDNA transcription. Interaction with BAZ2A/TIP5 recovers DNA-binding activity. The polypeptide is Transcription termination factor 1 (TTF1) (Homo sapiens (Human)).